The chain runs to 187 residues: Ribosome-recycling factor (187 aa).

It belongs to the RRF family.

It localises to the cytoplasm. In terms of biological role, responsible for the release of ribosomes from messenger RNA at the termination of protein biosynthesis. May increase the efficiency of translation by recycling ribosomes from one round of translation to another. The protein is Ribosome-recycling factor of Bradyrhizobium sp. (strain BTAi1 / ATCC BAA-1182).